We begin with the raw amino-acid sequence, 41 residues long: trp operon leader peptide (41 aa).

In terms of biological role, this protein is involved in control of the biosynthesis of tryptophan. The protein is trp operon leader peptide (trpL) of Vibrio parahaemolyticus serotype O3:K6 (strain RIMD 2210633).